The chain runs to 62 residues: DNA-binding protein 7b (62 aa).

It belongs to the 7 kDa DNA-binding/endoribonuclease P2 family. Monomer.

Its subcellular location is the cytoplasm. Its function is as follows. Can constrain negative DNA supercoils. May be involved in maintaining the integrity of the genome at high temperature. The sequence is that of DNA-binding protein 7b from Acidianus hospitalis (strain W1).